We begin with the raw amino-acid sequence, 259 residues long: Interleukin-1 receptor-associated kinase 1-binding protein 1 (259 aa).

Phosphoserine is present on residues Ser55, Ser61, Ser63, and Ser234. Phosphothreonine is present on Thr236. Residues 239–259 (AASKVFITFEVKGKEKKKKHL) are required for nuclear localization (NLS). Ser241 is modified (phosphoserine). A Phosphothreonine modification is found at Thr246.

Belongs to the IRAK1BP1 family. Interacts with IRAK1 and RELA. Interacts with HSPA8 and HSPA1. May interact with Listeria monocytogenes actA. Post-translationally, phosphorylation at Ser-55, Ser-61 and/or Ser-63 is required for full activity. Phosphorylated on at least one of Ser-234, Thr-236, Ser-241 and Thr-246 upon TNF-alpha activation, which favors nuclear translocation. As to expression, expressed in testis, brain, kidney, liver and heart.

The protein resides in the cytoplasm. The protein localises to the nucleus. Functionally, component of the IRAK1-dependent TNFRSF1A signaling pathway that leads to NF-kappa-B activation and is required for cell survival. Acts by enhancing RELA transcriptional activity. The polypeptide is Interleukin-1 receptor-associated kinase 1-binding protein 1 (Irak1bp1) (Mus musculus (Mouse)).